Here is a 324-residue protein sequence, read N- to C-terminus: MLEQVILFTIIMGFLISVLLSPIFIPFLRRLKFGQSIREEGPQSHQKKSGTPTMGGIMIIFSITITTIVMINKFSEISPEMFLLLFVTLGYGLLGFLDDYIKVAMKRNLGLTSKQKLIGQIVIAVIFYAVFHYYQFATTIRIPGTDVSFDLGWAYFILVVFMLVGGSNAVNLTDGLDGLLSGTAAIAFGAFAILAWNQSQYDVAIFSVAVAGAVLGFLVFNAHPAKVFMGDTGSLALGGAIVAIAILTKLEILLVIIGGVFVVETLSVILQVISFKTTGKRIFKMSPLHHHYELVGWSEWRVVVTFWTAGLLLAVLGIYIEVWL.

Transmembrane regions (helical) follow at residues Val-5 to Ile-25, Thr-51 to Ile-71, Ile-77 to Leu-97, Leu-117 to Ala-137, Val-147 to Ser-167, Leu-176 to Trp-196, Val-203 to His-223, Val-227 to Thr-248, and Val-302 to Val-322.

It belongs to the glycosyltransferase 4 family. MraY subfamily. Mg(2+) is required as a cofactor.

The protein localises to the cell membrane. It carries out the reaction UDP-N-acetyl-alpha-D-muramoyl-L-alanyl-gamma-D-glutamyl-meso-2,6-diaminopimeloyl-D-alanyl-D-alanine + di-trans,octa-cis-undecaprenyl phosphate = di-trans,octa-cis-undecaprenyl diphospho-N-acetyl-alpha-D-muramoyl-L-alanyl-D-glutamyl-meso-2,6-diaminopimeloyl-D-alanyl-D-alanine + UMP. It functions in the pathway cell wall biogenesis; peptidoglycan biosynthesis. Its function is as follows. Catalyzes the initial step of the lipid cycle reactions in the biosynthesis of the cell wall peptidoglycan: transfers peptidoglycan precursor phospho-MurNAc-pentapeptide from UDP-MurNAc-pentapeptide onto the lipid carrier undecaprenyl phosphate, yielding undecaprenyl-pyrophosphoryl-MurNAc-pentapeptide, known as lipid I. This Bacillus pumilus (strain SAFR-032) protein is Phospho-N-acetylmuramoyl-pentapeptide-transferase.